We begin with the raw amino-acid sequence, 350 residues long: Protein-glutamate methylesterase/protein-glutamine glutaminase (350 aa).

In terms of domain architecture, Response regulatory spans 5–122; that stretch reads RVLSVDDSAL…REGMLAYSEM (118 aa). Aspartate 56 carries the 4-aspartylphosphate modification. Residues 152 to 338 form the CheB-type methylesterase domain; that stretch reads LLSSEKLLVI…DLSQVVSQQM (187 aa). Residues serine 164, histidine 190, and aspartate 286 contribute to the active site.

Belongs to the CheB family. Post-translationally, phosphorylated by CheA. Phosphorylation of the N-terminal regulatory domain activates the methylesterase activity.

The protein localises to the cytoplasm. It carries out the reaction [protein]-L-glutamate 5-O-methyl ester + H2O = L-glutamyl-[protein] + methanol + H(+). It catalyses the reaction L-glutaminyl-[protein] + H2O = L-glutamyl-[protein] + NH4(+). In terms of biological role, involved in chemotaxis. Part of a chemotaxis signal transduction system that modulates chemotaxis in response to various stimuli. Catalyzes the demethylation of specific methylglutamate residues introduced into the chemoreceptors (methyl-accepting chemotaxis proteins or MCP) by CheR. Also mediates the irreversible deamidation of specific glutamine residues to glutamic acid. The protein is Protein-glutamate methylesterase/protein-glutamine glutaminase of Enterobacter cloacae.